We begin with the raw amino-acid sequence, 312 residues long: Ribosomal protein L11 methyltransferase (312 aa).

The S-adenosyl-L-methionine site is built by Thr160, Gly181, Asp203, and Asn246.

Belongs to the methyltransferase superfamily. PrmA family.

It is found in the cytoplasm. The catalysed reaction is L-lysyl-[protein] + 3 S-adenosyl-L-methionine = N(6),N(6),N(6)-trimethyl-L-lysyl-[protein] + 3 S-adenosyl-L-homocysteine + 3 H(+). Methylates ribosomal protein L11. This Staphylococcus aureus (strain bovine RF122 / ET3-1) protein is Ribosomal protein L11 methyltransferase.